Reading from the N-terminus, the 30-residue chain is Cyclotide hypa-A (30 aa).

The cyclopeptide (Gly-Asn) cross-link spans 1–30 (GIPCAESCVYIPCTITALLGCSCKNKVCYN). Disulfide bonds link Cys-4–Cys-21, Cys-8–Cys-23, and Cys-13–Cys-28.

This is a cyclic peptide.

In terms of biological role, probably participates in a plant defense mechanism. This chain is Cyclotide hypa-A, found in Pombalia parviflora (Violetilla).